The chain runs to 420 residues: Histidine--tRNA ligase (420 aa).

Belongs to the class-II aminoacyl-tRNA synthetase family. Homodimer.

Its subcellular location is the cytoplasm. It carries out the reaction tRNA(His) + L-histidine + ATP = L-histidyl-tRNA(His) + AMP + diphosphate + H(+). This Anaplasma phagocytophilum (strain HZ) protein is Histidine--tRNA ligase.